Reading from the N-terminus, the 398-residue chain is Cytochrome b (398 aa).

Helical transmembrane passes span 38–58 (FGPL…FLAM), 82–104 (WFLR…FHMF), 119–139 (VRCS…IGYV), and 185–205 (FFSL…LHLG). 2 residues coordinate heme b: His-88 and His-102. Heme b contacts are provided by His-189 and His-203. His-208 serves as a coordination point for a ubiquinone. A run of 4 helical transmembrane segments spans residues 231–251 (YYVK…IFIF), 295–316 (AGGV…FLNQ), 328–348 (IYHI…WIGC), and 355–374 (FVTI…AIMP).

This sequence belongs to the cytochrome b family. As to quaternary structure, the main subunits of complex b-c1 are: cytochrome b, cytochrome c1 and the Rieske protein. The cofactor is heme b.

It is found in the mitochondrion inner membrane. Component of the ubiquinol-cytochrome c reductase complex (complex III or cytochrome b-c1 complex) that is part of the mitochondrial respiratory chain. The b-c1 complex mediates electron transfer from ubiquinol to cytochrome c. Contributes to the generation of a proton gradient across the mitochondrial membrane that is then used for ATP synthesis. This is Cytochrome b (MT-CYB) from Daucus carota (Wild carrot).